Here is a 313-residue protein sequence, read N- to C-terminus: Ribosomal RNA small subunit methyltransferase H (313 aa).

S-adenosyl-L-methionine is bound by residues 35–37 (GGH), D55, F79, D101, and Q108.

The protein belongs to the methyltransferase superfamily. RsmH family.

Its subcellular location is the cytoplasm. The catalysed reaction is cytidine(1402) in 16S rRNA + S-adenosyl-L-methionine = N(4)-methylcytidine(1402) in 16S rRNA + S-adenosyl-L-homocysteine + H(+). Functionally, specifically methylates the N4 position of cytidine in position 1402 (C1402) of 16S rRNA. The chain is Ribosomal RNA small subunit methyltransferase H from Shigella flexneri.